Consider the following 757-residue polypeptide: Lysyl oxidase homolog 4 (757 aa).

A signal peptide spans 1–25 (MWFLPAALPLLPLLLLLGQAPPSRP). 4 consecutive SRCR domains span residues 33–134 (LRLV…VVCN), 160–288 (VRLK…VSCV), 312–412 (VRLR…VRCN), and 422–530 (VRLA…VSCT). 17 disulfides stabilise this stretch: cysteine 59–cysteine 123, cysteine 72–cysteine 133, cysteine 103–cysteine 113, cysteine 192–cysteine 277, cysteine 205–cysteine 287, cysteine 252–cysteine 262, cysteine 337–cysteine 401, cysteine 350–cysteine 411, cysteine 381–cysteine 391, cysteine 451–cysteine 516, cysteine 464–cysteine 529, cysteine 498–cysteine 508, cysteine 559–cysteine 565, cysteine 611–cysteine 659, cysteine 643–cysteine 649, cysteine 671–cysteine 681, and cysteine 718–cysteine 732. An N-linked (GlcNAc...) asparagine glycan is attached at asparagine 199. The tract at residues 534 to 737 (PDLVMNAQLV…WLHNCHTGDS (204 aa)) is lysyl-oxidase like. Residues histidine 612, histidine 614, and histidine 616 each contribute to the Cu cation site. Residue asparagine 630 is glycosylated (N-linked (GlcNAc...) asparagine). The lysine tyrosylquinone (Lys-Tyr) cross-link spans 639 to 675 (KASFCLEDTNCPTGMQRRYACANFGEQGVTVGCWDTY). 2',4',5'-topaquinone is present on tyrosine 675.

Belongs to the lysyl oxidase family. The cofactor is Cu cation. Lysine tyrosylquinone residue is required as a cofactor. The lysine tyrosylquinone cross-link (LTQ) is generated by condensation of the epsilon-amino group of a lysine with a topaquinone produced by oxidation of tyrosine. In terms of processing, may be proteolytically cleaved by BMP1.

Its subcellular location is the secreted. The protein localises to the extracellular space. The enzyme catalyses L-lysyl-[protein] + O2 + H2O = (S)-2-amino-6-oxohexanoyl-[protein] + H2O2 + NH4(+). Functionally, catalyzes the oxidative deamination of lysine and hydroxylysine residues in collagen and elastin, resulting in the formation of covalent cross-linkages, and the stabilization of collagen and elastin fibers. This is Lysyl oxidase homolog 4 (LOXL4) from Bos taurus (Bovine).